A 291-amino-acid polypeptide reads, in one-letter code: Bis(5'-nucleosyl)-tetraphosphatase, symmetrical (291 aa).

It belongs to the Ap4A hydrolase family.

It carries out the reaction P(1),P(4)-bis(5'-adenosyl) tetraphosphate + H2O = 2 ADP + 2 H(+). In terms of biological role, hydrolyzes diadenosine 5',5'''-P1,P4-tetraphosphate to yield ADP. The chain is Bis(5'-nucleosyl)-tetraphosphatase, symmetrical from Coxiella burnetii (strain RSA 331 / Henzerling II).